The following is a 472-amino-acid chain: Protein hedgehog (472 aa).

The N-palmitoyl cysteine moiety is linked to residue Cys-84. The Ca(2+) site is built by Glu-149, Asp-154, Glu-185, Asp-188, and Asp-190. Gly-256 carries Cholesterol glycine ester lipidation.

Belongs to the hedgehog family. As to quaternary structure, interacts with shf. In terms of processing, the C-terminal part of the hedgehog protein precursor displays an autoproteolysis activity that results in the cleavage of the full-length protein into two parts (N-product and C-product). In addition, the C-terminal part displays a cholesterol transferase activity that results by the covalent attachment of a cholesterol moiety to the C-terminal of the newly generated N-product. The N-product is the active species in both local and long-range signaling, whereas the C-product has no signaling activity. Cholesterylation is required for N-product targeting to lipid rafts and multimerization. Post-translationally, N-palmitoylation by Rasp of the hedgehog N-product, within the secretory pathway, is required for the embryonic and larval patterning activities of the hedgehog signal.

Its subcellular location is the nucleus. The protein resides in the cytoplasm. It is found in the cell membrane. The catalysed reaction is glycyl-L-cysteinyl-[protein] + cholesterol + H(+) = [protein]-C-terminal glycyl cholesterol ester + N-terminal L-cysteinyl-[protein]. Functionally, the C-terminal part of the hedgehog protein precursor displays an autoproteolysis activity that results in the cleavage of the full-length protein into two parts (N-product and C-product). In addition, the C-terminal part displays a cholesterol transferase activity that results by the covalent attachment of a cholesterol moiety to the C-terminal of the newly generated N-product. Once cleaved, the C-product has no signaling activity and diffuses from the cell. Its function is as follows. The dually lipidated hedgehog protein N-product is a morphogen which is essential for a variety of patterning events during development. Establishes the anterior-posterior axis of the embryonic segments and patterns the larval imaginal disks. Binds to the patched (ptc) receptor, which functions in association with smoothened (smo), to activate the transcription of target genes wingless (wg), decapentaplegic (dpp) and ptc. In the absence of hh, ptc represses the constitutive signaling activity of smo through fused (fu). Essential component of a signaling pathway which regulates the Duox-dependent gut immune response to bacterial uracil; required to activate Cad99C-dependent endosome formation, norpA-dependent Ca2+ mobilization and p38 MAPK, which are essential steps in the Duox-dependent production of reactive oxygen species (ROS) in response to intestinal bacterial infection. During photoreceptor differentiation, it up-regulates transcription of Ubr3, which in turn promotes the hh-signaling pathway by mediating the ubiquitination and degradation of cos. The polypeptide is Protein hedgehog (Drosophila ananassae (Fruit fly)).